Consider the following 235-residue polypeptide: Small ribosomal subunit protein uS2 (235 aa).

It belongs to the universal ribosomal protein uS2 family.

This is Small ribosomal subunit protein uS2 (rpsB) from Geobacillus stearothermophilus (Bacillus stearothermophilus).